The sequence spans 115 residues: Large ribosomal subunit protein uL18 (115 aa).

It belongs to the universal ribosomal protein uL18 family. As to quaternary structure, part of the 50S ribosomal subunit; part of the 5S rRNA/L5/L18/L25 subcomplex. Contacts the 5S and 23S rRNAs.

This is one of the proteins that bind and probably mediate the attachment of the 5S RNA into the large ribosomal subunit, where it forms part of the central protuberance. The sequence is that of Large ribosomal subunit protein uL18 from Marinobacter nauticus (strain ATCC 700491 / DSM 11845 / VT8) (Marinobacter aquaeolei).